The chain runs to 484 residues: Iroquois-class homeodomain protein IRX-5 (484 aa).

The homeobox; TALE-type DNA-binding region spans 112–174 (DPAYRKNATR…NARRRLKKEN (63 aa)). Disordered stretches follow at residues 176-393 (MTWT…QCPF) and 424-443 (GHPG…FNGL). A compositionally biased stretch (acidic residues) spans 185 to 202 (EDEEEEENIDLEKNDEDE). 2 stretches are compositionally biased toward basic and acidic residues: residues 203–212 (PQKPEDKGDL) and 249–265 (SDFK…ELPR). Ser-273 is modified (phosphoserine). A compositionally biased stretch (pro residues) spans 318-328 (SPPPPPPPPPA). The segment covering 375-389 (SRASPAPAPARSPSA) has biased composition (low complexity). At Ser-465 the chain carries Phosphoserine.

Belongs to the TALE/IRO homeobox family. As to expression, not expressed in the developing metanephric kidney or adult kidney.

Its subcellular location is the nucleus. Establishes the cardiac repolarization gradient by its repressive actions on the KCND2 potassium-channel gene. Required for retinal cone bipolar cell differentiation. May regulate contrast adaptation in the retina and control specific aspects of visual function in circuits of the mammalian retina. Involved in craniofacial and gonadal development. Modulates the migration of progenitor cell populations in branchial arches and gonads by repressing CXCL12. In Mus musculus (Mouse), this protein is Iroquois-class homeodomain protein IRX-5 (Irx5).